Reading from the N-terminus, the 483-residue chain is Regulatory protein ViaA (483 aa).

It belongs to the ViaA family. In terms of assembly, homodimer. Interacts with RavA.

The protein resides in the cytoplasm. Functionally, component of the RavA-ViaA chaperone complex, which may act on the membrane to optimize the function of some of the respiratory chains. ViaA stimulates the ATPase activity of RavA. The protein is Regulatory protein ViaA of Escherichia fergusonii (strain ATCC 35469 / DSM 13698 / CCUG 18766 / IAM 14443 / JCM 21226 / LMG 7866 / NBRC 102419 / NCTC 12128 / CDC 0568-73).